Here is a 332-residue protein sequence, read N- to C-terminus: 2,3-diketo-L-gulonate reductase (332 aa).

His44 acts as the Proton donor in catalysis. NAD(+)-binding positions include 168–174 (ITMVDMS), 224–225 (WK), and 304–306 (GHE).

Belongs to the LDH2/MDH2 oxidoreductase family. DlgD subfamily. In terms of assembly, homodimer.

The protein localises to the cytoplasm. The catalysed reaction is 3-dehydro-L-gulonate + NAD(+) = 2,3-dioxo-L-gulonate + NADH + H(+). The enzyme catalyses 3-dehydro-L-gulonate + NADP(+) = 2,3-dioxo-L-gulonate + NADPH + H(+). In terms of biological role, catalyzes the reduction of 2,3-diketo-L-gulonate in the presence of NADH, to form 3-keto-L-gulonate. The protein is 2,3-diketo-L-gulonate reductase of Salmonella paratyphi C (strain RKS4594).